The chain runs to 174 residues: Myelin basic protein (174 aa).

Residues 1-86 form a disordered region; it reads MASQKRSSFR…GRPGDDNPVV (86 aa). Alanine 2 is modified (N-acetylalanine; in forms C1, C2 and C3). The residue at position 4 (glutamine 4) is a Deamidated glutamine; in forms C1 and C2; partial. Serine 8 is subject to Phosphoserine; in forms C2 and C3. A Phosphoserine; in form C2 modification is found at serine 19. A compositionally biased stretch (basic and acidic residues) spans 22–35; sequence DHARHGSPRHRDSG. Residue arginine 25 is modified to Citrulline; in forms C1, C2 and C3. A Phosphoserine; in forms C2 and C3 modification is found at serine 34. Arginine 42 is subject to Citrulline; in form C3. Residues 45-61 are compositionally biased toward basic and acidic residues; that stretch reads GGDRHVPRRGFGKDIHA. A Phosphoserine; in forms C2 and C3 modification is found at serine 65. Deamidated glutamine; in forms C1, C2 and C3; partial is present on glutamine 72. Serine 74 is subject to Phosphoserine; in form C2. Deamidated asparagine; in forms C1, C2 and C3; partial is present on asparagine 91. Threonine 97 bears the Phosphothreonine; in forms C2 and C3 mark. Residue glutamine 102 is modified to Deamidated glutamine; in forms C1, C2 and C3; partial. Glutamine 102 carries the post-translational modification Deamidated glutamine; in form C1. Position 106 is an omega-N-methylarginine; in forms C1, C2 and C3; alternate (arginine 106). The residue at position 106 (arginine 106) is a Symmetric dimethylarginine; in forms C1, C2 and C3; alternate. Residues serine 114 and serine 142 each carry the phosphoserine; in forms C2 and C3 modification. Residues 126 to 174 are disordered; that stretch reads SGKFYEHKSAHKGHKGSYHEGQGTLSKIFKLGGSGSRPGSRSGSPVARR. Deamidated glutamine; in forms C1, C2 and C3; partial is present on glutamine 147. Positions 162–174 are enriched in low complexity; it reads RPGSRSGSPVARR. At serine 165 the chain carries Phosphoserine; in forms C2 and C3. Arginine 166 carries the citrulline; in forms C2 and C3 modification. Serine 169 is modified (phosphoserine; in forms C2 and C3).

Belongs to the myelin basic protein family. Homodimer. Post-translationally, several charge isomers are produced as a result of optional post-translational modifications, such as phosphorylation of serine or threonine residues, deamidation of glutamine or asparagine residues, citrullination and methylation of arginine residues. Chicken MBP contains 4 charge components denoted as C1, C2, C3 and C8. C1 lacks any phosphorylation sites, whereas C2 and C3 contain respectively 10 and 8 phosphorylation sites and arginine residues modified to citrulline. All three charge components contain deamidated glutamines and asparagine, and a methylated arginine.

It localises to the myelin membrane. Is, with PLP, the most abundant protein component of the myelin membrane in the CNS. Has a role in both the formation and stabilization of this compact multilayer arrangement of bilayers. Each splice variant and charge isomer may have a specialized function in the assembly of an optimized, biochemically functional myelin membrane. The chain is Myelin basic protein (MBP) from Gallus gallus (Chicken).